The following is a 166-amino-acid chain: Flagellar protein LafL (166 aa).

Residues 6 to 26 (MIAMFIAMIITSALVSAATIM) form a helical membrane-spanning segment.

Belongs to the FliL family.

The protein localises to the cell inner membrane. Controls the rotational direction of flagella during chemotaxis. The sequence is that of Flagellar protein LafL (lafL) from Vibrio parahaemolyticus serotype O3:K6 (strain RIMD 2210633).